The following is a 333-amino-acid chain: Anthranilate phosphoribosyltransferase (333 aa).

5-phospho-alpha-D-ribose 1-diphosphate contacts are provided by residues Gly80, 83-84 (GD), Thr88, 90-93 (NLST), 108-116 (KHGNRSASG), and Ser120. Residue Gly80 coordinates anthranilate. Ser92 provides a ligand contact to Mg(2+). Asn111 is a binding site for anthranilate. Arg166 contacts anthranilate. Mg(2+) contacts are provided by Asp224 and Glu225.

Belongs to the anthranilate phosphoribosyltransferase family. In terms of assembly, homodimer. The cofactor is Mg(2+).

The catalysed reaction is N-(5-phospho-beta-D-ribosyl)anthranilate + diphosphate = 5-phospho-alpha-D-ribose 1-diphosphate + anthranilate. It participates in amino-acid biosynthesis; L-tryptophan biosynthesis; L-tryptophan from chorismate: step 2/5. Its function is as follows. Catalyzes the transfer of the phosphoribosyl group of 5-phosphorylribose-1-pyrophosphate (PRPP) to anthranilate to yield N-(5'-phosphoribosyl)-anthranilate (PRA). The sequence is that of Anthranilate phosphoribosyltransferase from Pyrobaculum arsenaticum (strain DSM 13514 / JCM 11321 / PZ6).